Consider the following 95-residue polypeptide: Cytochrome b (95 aa).

3 helical membrane-spanning segments follow: residues glycine 1–methionine 16, tryptophan 40–isoleucine 61, and tryptophan 76–valine 95. Heme b contacts are provided by histidine 46 and histidine 60.

The protein belongs to the cytochrome b family. As to quaternary structure, the cytochrome bc1 complex contains 3 respiratory subunits (MT-CYB, CYC1 and UQCRFS1), 2 core proteins (UQCRC1 and UQCRC2) and probably 6 low-molecular weight proteins. Heme b is required as a cofactor.

It is found in the mitochondrion inner membrane. Functionally, component of the ubiquinol-cytochrome c reductase complex (complex III or cytochrome b-c1 complex) that is part of the mitochondrial respiratory chain. The b-c1 complex mediates electron transfer from ubiquinol to cytochrome c. Contributes to the generation of a proton gradient across the mitochondrial membrane that is then used for ATP synthesis. The sequence is that of Cytochrome b (mt-cyb) from Gomphosus varius (Bird wrasse).